Reading from the N-terminus, the 488-residue chain is Diacylglycerol O-acyltransferase 1 (488 aa).

The segment at 1-57 (MGDRGSSRRRRTGSRPSSHGGGGPAAAEEEVRDAAAGPDVGAAGDAPAPAPNKDGDA) is disordered. Residues 1-83 (MGDRGSSRRR…SLFSSDSGFS (83 aa)) lie on the Cytoplasmic side of the membrane. Residues 1-91 (MGDRGSSRRR…FSNYRGILNW (91 aa)) are involved in homomerization. 2 positions are modified to phosphoserine: Ser17 and Ser18. Over residues 34 to 47 (AAAGPDVGAAGDAP) the composition is skewed to low complexity. Residues 84-118 (NYRGILNWCVVMLILSNARLFLENLIKYGILVDPI) form a helical membrane-spanning segment. Residues 119 to 130 (QVVSLFLKDPYS) are Lumenal-facing. The extracellular loop 1 (EL1) stretch occupies residues 119–130 (QVVSLFLKDPYS). Residues 131–156 (WPAPCLVIAANVFAVAAFQVEKRLAV) traverse the membrane as a helical segment. The segment at 131 to 488 (WPAPCLVIAA…LNYEAPAAEA (358 aa)) is MBOAT fold. Topologically, residues 157 to 161 (GALTE) are cytoplasmic. Residues 162 to 184 (QAGLLLHVANLATILCFPAAVVL) form a helical membrane-spanning segment. The Lumenal segment spans residues 185 to 191 (LVESITP). Residues 192–223 (VGSLLALMAHTILFLKLFSYRDVNSWCRRARA) traverse the membrane as a helical segment. At 224-273 (KAASAGKKASSAAAPHTVSYPDNLTYRDLYYFLFAPTLCYELNFPRSPRI) the chain is on the cytoplasmic side. Residues 224-276 (KAASAGKKASSAAAPHTVSYPDNLTYRDLYYFLFAPTLCYELNFPRSPRIRKR) form an intracellular loop 1 (IL1) region. The chain crosses the membrane as a helical span at residues 274–308 (RKRFLLRRILEMLFFTQLQVGLIQQWMVPTIQNSM). Over 309–315 (KPFKDMD) the chain is Lumenal. The chain crosses the membrane as a helical span at residues 316-353 (YSRIIERLLKLAVPNHLIWLIFFYWLFHSCLNAVAELM). The Cytoplasmic segment spans residues 354–399 (QFGDREFYRDWWNSESVTYFWQNWNIPVHKWCIRHFYKPMLRRGSS). Residues 354 to 399 (QFGDREFYRDWWNSESVTYFWQNWNIPVHKWCIRHFYKPMLRRGSS) are intracellular loop 2 (IL2). Positions 360-366 (FYRDWWN) match the FYXDWWN motif motif. An acyl-CoA contacts are provided by residues 374–382 (WQNWNIPVH), Tyr390, and Arg404. The tract at residues 380–394 (PVHKWCIRHFYKPML) is amphipathic helix (AH). The helical transmembrane segment at 400–420 (KWMARTGVFLASAFFHEYLVS) threads the bilayer. His415 is a catalytic residue. The Lumenal portion of the chain corresponds to 421–428 (VPLRMFRL). The chain crosses the membrane as a helical span at residues 429-447 (WAFTGMMAQIPLAWFVGRF). The Cytoplasmic segment spans residues 448 to 449 (FQ). The chain crosses the membrane as a helical span at residues 450 to 481 (GNYGNAAVWLSLIIGQPIAVLMYVHDYYVLNY). Position 477 (Tyr477) interacts with an acyl-CoA. The Lumenal segment spans residues 482-488 (EAPAAEA).

The protein belongs to the membrane-bound acyltransferase family. Sterol o-acyltransferase subfamily. As to quaternary structure, homodimer or homotetramer; both forms have similar enzymatic activities.

It is found in the endoplasmic reticulum membrane. The catalysed reaction is an acyl-CoA + a 1,2-diacyl-sn-glycerol = a triacyl-sn-glycerol + CoA. It carries out the reaction all-trans-retinol + an acyl-CoA = an all-trans-retinyl ester + CoA. It catalyses the reaction 2-(9Z-octadecenoyl)-glycerol + (9Z)-octadecenoyl-CoA = 1,2-di-(9Z-octadecenoyl)-sn-glycerol + CoA. The enzyme catalyses 1,2-di-(9Z-octadecenoyl)-sn-glycerol + (9Z)-octadecenoyl-CoA = 1,2,3-tri-(9Z-octadecenoyl)-glycerol + CoA. The catalysed reaction is all-trans-retinol + hexadecanoyl-CoA = all-trans-retinyl hexadecanoate + CoA. It carries out the reaction 1-O-(9Z-octadecenyl)-glycerol + (9Z)-octadecenoyl-CoA = 1-O-(9Z-octadecyl)-3-(9Z-octadecenoyl)-glycerol + CoA. It catalyses the reaction 1-O-(9Z-octadecyl)-3-(9Z-octadecenoyl)-glycerol + (9Z)-octadecenoyl-CoA = 1-O-(9Z-octadecenyl)-2,3-di-(9Z-octadecenoyl)glycerol + CoA. The enzyme catalyses 1-(9Z-octadecenoyl)-glycerol + (9Z)-octadecenoyl-CoA = 1,2-di-(9Z-octadecenoyl)-glycerol + CoA. The catalysed reaction is 1,2-di-(9Z-octadecenoyl)-glycerol + (9Z)-octadecenoate + H(+) = 1,2,3-tri-(9Z-octadecenoyl)-glycerol + H2O. It carries out the reaction 1-octadecanoyl-2-(5Z,8Z,11Z,14Z-eicosatetraenoyl)-sn-glycerol + (9Z)-octadecenoyl-CoA = 1-octadecanoyl-2-(5Z,8Z,11Z,14Z)-eicosatetraenoyl-3-(9Z)-octadecenoyl-sn-glycerol + CoA. It catalyses the reaction hexadecane-1,2-diol + 2 hexadecanoyl-CoA = 1,2-O,O-dihexadecanoyl-1,2-hexadecanediol + 2 CoA. The enzyme catalyses hexadecane-1,2-diol + hexadecanoyl-CoA = 2-hydroxyhexadecyl hexadecanoate + CoA. The catalysed reaction is 2-(9Z-octadecenoyl)-glycerol + hexadecanoyl-CoA = 1-hexadecanoyl-2-(9Z-octadecenoyl)-sn-glycerol + CoA. It carries out the reaction 1,2-di-(9Z-octadecenoyl)-sn-glycerol + hexadecanoyl-CoA = 1,2-di-(9Z)-octadecenoyl-3-hexadecanoyl-sn-glycerol + CoA. It catalyses the reaction hexadecan-1-ol + hexadecanoyl-CoA = hexadecanyl hexadecanoate + CoA. The enzyme catalyses 13-cis-retinol + hexadecanoyl-CoA = 13-cis-retinyl hexadecanoate + CoA. The catalysed reaction is 1,3-di-(9Z-octadecenoyl)-glycerol + (9Z)-octadecenoyl-CoA = 1,2,3-tri-(9Z-octadecenoyl)-glycerol + CoA. It carries out the reaction 2,3-di-(9Z)-octadecenoyl-sn-glycerol + (9Z)-octadecenoyl-CoA = 1,2,3-tri-(9Z-octadecenoyl)-glycerol + CoA. It functions in the pathway lipid metabolism; glycerolipid metabolism. With respect to regulation, XP620 is a selective DGAT1 inhibitor. Catalyzes the terminal and only committed step in triacylglycerol synthesis by using diacylglycerol and fatty acyl CoA as substrates. Highly expressed in epithelial cells of the small intestine and its activity is essential for the absorption of dietary fats. In liver, plays a role in esterifying exogenous fatty acids to glycerol, and is required to synthesize fat for storage. Also present in female mammary glands, where it produces fat in the milk. May be involved in VLDL (very low density lipoprotein) assembly. In contrast to DGAT2 it is not essential for survival. Functions as the major acyl-CoA retinol acyltransferase (ARAT) in the skin, where it acts to maintain retinoid homeostasis and prevent retinoid toxicity leading to skin and hair disorders. Exhibits additional acyltransferase activities, includin acyl CoA:monoacylglycerol acyltransferase (MGAT), wax monoester and wax diester synthases. Also able to use 1-monoalkylglycerol (1-MAkG) as an acyl acceptor for the synthesis of monoalkyl-monoacylglycerol (MAMAG). The chain is Diacylglycerol O-acyltransferase 1 from Homo sapiens (Human).